Reading from the N-terminus, the 85-residue chain is Putative membrane protein insertion efficiency factor (85 aa).

The disordered stretch occupies residues 62–85; it reads PLGSDGYDPVPEPKDRKPPHSPAG.

This sequence belongs to the UPF0161 family.

The protein resides in the cell inner membrane. In terms of biological role, could be involved in insertion of integral membrane proteins into the membrane. This Ruegeria pomeroyi (strain ATCC 700808 / DSM 15171 / DSS-3) (Silicibacter pomeroyi) protein is Putative membrane protein insertion efficiency factor.